Consider the following 189-residue polypeptide: Nucleolar protein 16 (189 aa).

The segment covering 1 to 33 (MARDVKKRGKPAYTNRRNRQKYLKKKDNKKKLS) has biased composition (basic residues). A disordered region spans residues 1–34 (MARDVKKRGKPAYTNRRNRQKYLKKKDNKKKLSK).

Belongs to the NOP16 family.

It is found in the nucleus. The protein localises to the nucleolus. This chain is Nucleolar protein 16, found in Caenorhabditis elegans.